Here is a 189-residue protein sequence, read N- to C-terminus: Large ribosomal subunit protein bL9 (189 aa).

Belongs to the bacterial ribosomal protein bL9 family.

In terms of biological role, binds to the 23S rRNA. This Cereibacter sphaeroides (strain ATCC 17023 / DSM 158 / JCM 6121 / CCUG 31486 / LMG 2827 / NBRC 12203 / NCIMB 8253 / ATH 2.4.1.) (Rhodobacter sphaeroides) protein is Large ribosomal subunit protein bL9.